We begin with the raw amino-acid sequence, 301 residues long: MGFMLYEGIDSKSIEEITEESEKTKTDLQKANTPNKTEAVHSLNNTCSEQNSGTKDYLNSLQFLPSNFRPKTHKKKKSVSSYLSSTIQKNANENIPHVQCRNDSQSTVTTRNPTPFKIEVGIYPSKPNNLNKEPPASTVHSDNLGDAVEHEWVELYDPLFPTSYSVFKESDYANLCETNWSHYVNQVPSLSIEAKLSNIVNASKSGIGPPPSLLSHATLARPSESMVLSNNIAAEDLDFFKKSPPVPAISKKENVALKMLQRCGWKEGQGLGQHNQGIINPLHVEISGFVTETKHSKINDK.

A compositionally biased stretch (basic and acidic residues) spans 16–28; the sequence is EITEESEKTKTDL. A disordered region spans residues 16 to 38; it reads EITEESEKTKTDLQKANTPNKTE. The span at 29 to 38 shows a compositional bias: polar residues; that stretch reads QKANTPNKTE. Residues 252-301 form the G-patch domain; it reads KENVALKMLQRCGWKEGQGLGQHNQGIINPLHVEISGFVTETKHSKINDK.

This is an uncharacterized protein from Schizosaccharomyces pombe (strain 972 / ATCC 24843) (Fission yeast).